A 350-amino-acid chain; its full sequence is Leucine-rich repeat-containing protein 58 (350 aa).

LRR repeat units lie at residues 14-34, 35-56, 58-80, 81-102, 105-125, 128-149, 151-173, 174-195, 197-218, and 220-240; these read NLTH…NKRK, DVQQ…VASF, HLHL…LGLT, KLKT…KEMG, RLEV…QFLQ, TLKS…IENL, SLEF…ANLP, YLSY…LAQV, SLRS…ILSL, and HLHE…RDLT.

This chain is Leucine-rich repeat-containing protein 58 (lrrc58), found in Xenopus laevis (African clawed frog).